Consider the following 236-residue polypeptide: Kinetochore protein Spc25 (236 aa).

The stretch at 44–106 forms a coiled coil; the sequence is KNIISAKEAI…DMEAQLLRHT (63 aa). Positions 194-217 are disordered; the sequence is EVAGASPVTPSGSERPKATSKHSN.

Belongs to the SPC25 family. Component of the Ndc80 complex, which is composed of Ndc80, Nuf2 and Spc25.

The protein resides in the nucleus. Its subcellular location is the chromosome. It localises to the centromere. The protein localises to the kinetochore. In terms of biological role, acts as a component of the essential kinetochore-associated Ndc80 complex, which is required for chromosome segregation and spindle checkpoint activity during meiosis and mitosis. Required for kinetochore integrity and the organization of stable microtubule binding sites in the outer plate of the kinetochore. Participates in SAC signaling that responds specifically to disruptions in spindle microtubule dynamics. The NDC80 complex synergistically enhances the affinity of the SKA1 complex for microtubules and may allow the NDC80 complex to track depolymerizing microtubules. The chain is Kinetochore protein Spc25 from Drosophila persimilis (Fruit fly).